The primary structure comprises 247 residues: Uracil-DNA glycosylase (247 aa).

Asp-83 functions as the Proton acceptor in the catalytic mechanism.

The protein belongs to the uracil-DNA glycosylase (UDG) superfamily. UNG family.

The protein resides in the cytoplasm. It catalyses the reaction Hydrolyzes single-stranded DNA or mismatched double-stranded DNA and polynucleotides, releasing free uracil.. In terms of biological role, excises uracil residues from the DNA which can arise as a result of misincorporation of dUMP residues by DNA polymerase or due to deamination of cytosine. The chain is Uracil-DNA glycosylase from Deinococcus radiodurans (strain ATCC 13939 / DSM 20539 / JCM 16871 / CCUG 27074 / LMG 4051 / NBRC 15346 / NCIMB 9279 / VKM B-1422 / R1).